The following is a 199-amino-acid chain: Putative DNA-directed RNA polymerase subunit L376 (199 aa).

Belongs to the eukaryotic RPB7/RPC8 RNA polymerase subunit family.

The protein resides in the virion. It catalyses the reaction RNA(n) + a ribonucleoside 5'-triphosphate = RNA(n+1) + diphosphate. This Acanthamoeba polyphaga (Amoeba) protein is Putative DNA-directed RNA polymerase subunit L376.